A 220-amino-acid polypeptide reads, in one-letter code: Cytidylate kinase (220 aa).

An ATP-binding site is contributed by 9–17 (GPAASGKST).

It belongs to the cytidylate kinase family. Type 1 subfamily.

The protein localises to the cytoplasm. The catalysed reaction is CMP + ATP = CDP + ADP. It carries out the reaction dCMP + ATP = dCDP + ADP. The chain is Cytidylate kinase from Thermotoga petrophila (strain ATCC BAA-488 / DSM 13995 / JCM 10881 / RKU-1).